A 1026-amino-acid chain; its full sequence is Beta-galactosidase (1026 aa).

Catalysis depends on Glu458, which acts as the Proton donor. The Nucleophile role is filled by Glu546.

The protein belongs to the glycosyl hydrolase 2 family.

It carries out the reaction Hydrolysis of terminal non-reducing beta-D-galactose residues in beta-D-galactosides.. In Streptococcus thermophilus, this protein is Beta-galactosidase (lacZ).